Consider the following 128-residue polypeptide: Large ribosomal subunit protein bL12 (128 aa).

The protein belongs to the bacterial ribosomal protein bL12 family. As to quaternary structure, homodimer. Part of the ribosomal stalk of the 50S ribosomal subunit. Forms a multimeric L10(L12)X complex, where L10 forms an elongated spine to which 2 to 4 L12 dimers bind in a sequential fashion. Binds GTP-bound translation factors.

In terms of biological role, forms part of the ribosomal stalk which helps the ribosome interact with GTP-bound translation factors. Is thus essential for accurate translation. This is Large ribosomal subunit protein bL12 from Halorhodospira halophila (strain DSM 244 / SL1) (Ectothiorhodospira halophila (strain DSM 244 / SL1)).